A 425-amino-acid chain; its full sequence is Enolase (425 aa).

Glutamine 163 is a binding site for (2R)-2-phosphoglycerate. The active-site Proton donor is the glutamate 205. Positions 242, 286, and 313 each coordinate Mg(2+). (2R)-2-phosphoglycerate-binding residues include lysine 338, arginine 367, serine 368, and lysine 389. The active-site Proton acceptor is lysine 338.

This sequence belongs to the enolase family. The cofactor is Mg(2+).

The protein localises to the cytoplasm. The protein resides in the secreted. It is found in the cell surface. The catalysed reaction is (2R)-2-phosphoglycerate = phosphoenolpyruvate + H2O. It participates in carbohydrate degradation; glycolysis; pyruvate from D-glyceraldehyde 3-phosphate: step 4/5. Catalyzes the reversible conversion of 2-phosphoglycerate (2-PG) into phosphoenolpyruvate (PEP). It is essential for the degradation of carbohydrates via glycolysis. In Lactobacillus delbrueckii subsp. bulgaricus (strain ATCC 11842 / DSM 20081 / BCRC 10696 / JCM 1002 / NBRC 13953 / NCIMB 11778 / NCTC 12712 / WDCM 00102 / Lb 14), this protein is Enolase.